The chain runs to 511 residues: MALRAMRGIVNGAAPELPVPTGGPTVGAREQALAVSRNYLSQPRLTYKTVSGVNGPLVILDHVKFPRYAEIVHLTLPDGTKRSGQVLEVSGSKAVVQVFEGTSGIDAKKTSCEFTGDILRTPVSEDMLGRVFNGSGKPIDRGPVVLAEDFLDIMGQPINPQCRIYPEEMIQTGISAIDGMNSIARGQKIPIFSAAGLPHNEIAAQICRQAGLVKKSKDVVDYSEENFAIVFAAMGVNMETARFFKSDFEENGSMDNVCLFLNLANDPTIERIITPRLALTTAEFLAYQCEKHVLVILTDMSSYAEALREVSAAREEVPGRRGFPGYMYTDLATIYERAGRVEGRNGSITQIPILTMPNDDITHPIPDLTGYITEGQIYVDRQLHNRQIYPPINVLPSLSRLMKSAIGEGMTRKDHADVSNQLYACYAIGKDVQAMKAVVGEEALTSDDLLYLEFLQKFERNFIAQGPYENRTVFETLDIGWQLLRIFPKEMLKRIPQSTLSEFYPRDSAKH.

Arg-400 serves as a coordination point for ATP.

It belongs to the ATPase alpha/beta chains family. As to quaternary structure, V-ATPase is a heteromultimeric enzyme made up of two complexes: the ATP-hydrolytic V1 complex and the proton translocation V0 complex. The V1 complex consists of three catalytic AB heterodimers that form a heterohexamer, three peripheral stalks each consisting of EG heterodimers, one central rotor including subunits D and F, and the regulatory subunits C and H. The proton translocation complex V0 consists of the proton transport subunit a, a ring of proteolipid subunits c9c'', rotary subunit d, subunits e and f, and the accessory subunits ATP6AP1/Ac45 and ATP6AP2/PRR.

Its subcellular location is the apical cell membrane. It is found in the melanosome. The protein resides in the cytoplasm. It localises to the cytoplasmic vesicle. The protein localises to the secretory vesicle. Its subcellular location is the synaptic vesicle membrane. It is found in the clathrin-coated vesicle membrane. Functionally, non-catalytic subunit of the V1 complex of vacuolar(H+)-ATPase (V-ATPase), a multisubunit enzyme composed of a peripheral complex (V1) that hydrolyzes ATP and a membrane integral complex (V0) that translocates protons. V-ATPase is responsible for acidifying and maintaining the pH of intracellular compartments and in some cell types, is targeted to the plasma membrane, where it is responsible for acidifying the extracellular environment. In renal intercalated cells, can partially compensate the lack of ATP6V1B1 and mediate secretion of protons (H+) into the urine under base-line conditions but not in conditions of acid load. In Pongo abelii (Sumatran orangutan), this protein is V-type proton ATPase subunit B, brain isoform (ATP6V1B2).